We begin with the raw amino-acid sequence, 435 residues long: GTPase Der (435 aa).

EngA-type G domains follow at residues 2–167 (ATVV…RESG) and 178–351 (PKIA…ESYC). Residues 8-15 (GRANVGKS), 55-59 (DTCGV), 118-121 (NKSE), 184-191 (GKPNVGKS), 231-235 (DTAGM), and 297-300 (NKFD) contribute to the GTP site. In terms of domain architecture, KH-like spans 352-435 (RKVPQQLLSK…PLVIEFKSRR (84 aa)).

This sequence belongs to the TRAFAC class TrmE-Era-EngA-EngB-Septin-like GTPase superfamily. EngA (Der) GTPase family. In terms of assembly, associates with the 50S ribosomal subunit.

In terms of biological role, GTPase that plays an essential role in the late steps of ribosome biogenesis. This is GTPase Der from Pseudothermotoga lettingae (strain ATCC BAA-301 / DSM 14385 / NBRC 107922 / TMO) (Thermotoga lettingae).